We begin with the raw amino-acid sequence, 107 residues long: Large ribosomal subunit protein bL21 (107 aa).

Belongs to the bacterial ribosomal protein bL21 family. As to quaternary structure, part of the 50S ribosomal subunit. Contacts protein L20.

This protein binds to 23S rRNA in the presence of protein L20. This Chlamydia trachomatis serovar L2 (strain ATCC VR-902B / DSM 19102 / 434/Bu) protein is Large ribosomal subunit protein bL21.